Here is a 121-residue protein sequence, read N- to C-terminus: UPF0102 protein BT_2236 (121 aa).

Belongs to the UPF0102 family.

This Bacteroides thetaiotaomicron (strain ATCC 29148 / DSM 2079 / JCM 5827 / CCUG 10774 / NCTC 10582 / VPI-5482 / E50) protein is UPF0102 protein BT_2236.